The primary structure comprises 422 residues: Glutamate-1-semialdehyde 2,1-aminomutase (422 aa).

At lysine 258 the chain carries N6-(pyridoxal phosphate)lysine.

This sequence belongs to the class-III pyridoxal-phosphate-dependent aminotransferase family. HemL subfamily. Homodimer. Pyridoxal 5'-phosphate is required as a cofactor.

It is found in the cytoplasm. It catalyses the reaction (S)-4-amino-5-oxopentanoate = 5-aminolevulinate. The protein operates within porphyrin-containing compound metabolism; protoporphyrin-IX biosynthesis; 5-aminolevulinate from L-glutamyl-tRNA(Glu): step 2/2. This Chlamydia trachomatis serovar L2 (strain ATCC VR-902B / DSM 19102 / 434/Bu) protein is Glutamate-1-semialdehyde 2,1-aminomutase.